The sequence spans 36 residues: APQEPVYPGDDATPEQMAKYAAELRRYINRLTRPRY.

Tyr-36 carries the post-translational modification Tyrosine amide.

Belongs to the NPY family.

It is found in the secreted. In terms of biological role, hormone secreted by pancreatic cells that acts as a regulator of pancreatic and gastrointestinal functions probably by signaling through the G protein-coupled receptor NPY4R2. This Didelphis virginiana (North American opossum) protein is Pancreatic polypeptide (PPY).